Reading from the N-terminus, the 275-residue chain is Large ribosomal subunit protein uL2 (275 aa).

2 disordered regions span residues 24–47 and 227–261; these read IHKG…NHHG and PVDH…KTRK.

Belongs to the universal ribosomal protein uL2 family. Part of the 50S ribosomal subunit. Forms a bridge to the 30S subunit in the 70S ribosome.

Functionally, one of the primary rRNA binding proteins. Required for association of the 30S and 50S subunits to form the 70S ribosome, for tRNA binding and peptide bond formation. It has been suggested to have peptidyltransferase activity; this is somewhat controversial. Makes several contacts with the 16S rRNA in the 70S ribosome. The chain is Large ribosomal subunit protein uL2 from Xylella fastidiosa (strain M12).